Consider the following 258-residue polypeptide: Cytochrome P450 1A2 (258 aa).

This sequence belongs to the cytochrome P450 family. Heme is required as a cofactor.

It localises to the endoplasmic reticulum membrane. The protein localises to the microsome membrane. It catalyses the reaction an organic molecule + reduced [NADPH--hemoprotein reductase] + O2 = an alcohol + oxidized [NADPH--hemoprotein reductase] + H2O + H(+). In terms of biological role, cytochromes P450 are a group of heme-thiolate monooxygenases. In liver microsomes, this enzyme is involved in an NADPH-dependent electron transport pathway. It oxidizes a variety of structurally unrelated compounds, including steroids, fatty acids, and xenobiotics. This is Cytochrome P450 1A2 (CYP1A2) from Gallus gallus (Chicken).